Reading from the N-terminus, the 72-residue chain is Translation initiation factor IF-1 1 (72 aa).

An S1-like domain is found at 1-72; it reads MSKDDVIQMQ…TRARIVFRSK (72 aa).

It belongs to the IF-1 family. As to quaternary structure, component of the 30S ribosomal translation pre-initiation complex which assembles on the 30S ribosome in the order IF-2 and IF-3, IF-1 and N-formylmethionyl-tRNA(fMet); mRNA recruitment can occur at any time during PIC assembly.

The protein localises to the cytoplasm. Functionally, one of the essential components for the initiation of protein synthesis. Stabilizes the binding of IF-2 and IF-3 on the 30S subunit to which N-formylmethionyl-tRNA(fMet) subsequently binds. Helps modulate mRNA selection, yielding the 30S pre-initiation complex (PIC). Upon addition of the 50S ribosomal subunit IF-1, IF-2 and IF-3 are released leaving the mature 70S translation initiation complex. This is Translation initiation factor IF-1 1 from Bordetella avium (strain 197N).